The following is a 215-amino-acid chain: 23.2 kDa heat shock protein (215 aa).

The N-terminal stretch at 1–27 (MASMRTAAAAAMLACIAVVLASTAADG) is a signal peptide. The region spanning 69–189 (DVAMLSMARV…GPRVVGIASA (121 aa)) is the sHSP domain. The segment at 183 to 215 (VVGIASAGGDDGGKKSIGGAGEGQNQQAKKVEL) is disordered. Residues 205 to 215 (GQNQQAKKVEL) show a composition bias toward polar residues.

The protein belongs to the small heat shock protein (HSP20) family. As to quaternary structure, may form oligomeric structures.

Its subcellular location is the endoplasmic reticulum. The polypeptide is 23.2 kDa heat shock protein (HSP23.2) (Oryza sativa subsp. japonica (Rice)).